Reading from the N-terminus, the 289-residue chain is MTAATLDLAIITGLSGAGRSTAAKCLEDLGWFVVDNLPPALLSTMAELGHRSGGAVSRIAVVVDVRGRAFFSDLRAAVEALDSRGMHPRMLFLEASDDALVRRFDHVRRPHPLQGDERVVDGINRERTLLAELRGEADLVLDTTDLNVHELRAKIDAAFGQPRANRLNATVISFGYKYGLPLDADLVADCRFLPNPHWVEALRPYTGRDSQVRDYVLAQPGATEFVDQYTALLRLVGEGYVREGKRYLTLAVGCTGGKHRSVAVAEQLGARLAADGVGVRVVHRDLGRE.

Residue 13–20 participates in ATP binding; that stretch reads GLSGAGRS. 64 to 67 is a binding site for GTP; it reads DVRG.

The protein belongs to the RapZ-like family.

Displays ATPase and GTPase activities. This chain is Nucleotide-binding protein Franean1_2060, found in Parafrankia sp. (strain EAN1pec).